The primary structure comprises 278 residues: Ribosomal RNA small subunit methyltransferase A (278 aa).

Residues asparagine 18, leucine 20, glycine 45, glutamate 66, aspartate 89, and asparagine 110 each contribute to the S-adenosyl-L-methionine site.

It belongs to the class I-like SAM-binding methyltransferase superfamily. rRNA adenine N(6)-methyltransferase family. RsmA subfamily.

Its subcellular location is the cytoplasm. The enzyme catalyses adenosine(1518)/adenosine(1519) in 16S rRNA + 4 S-adenosyl-L-methionine = N(6)-dimethyladenosine(1518)/N(6)-dimethyladenosine(1519) in 16S rRNA + 4 S-adenosyl-L-homocysteine + 4 H(+). Specifically dimethylates two adjacent adenosines (A1518 and A1519) in the loop of a conserved hairpin near the 3'-end of 16S rRNA in the 30S particle. May play a critical role in biogenesis of 30S subunits. The chain is Ribosomal RNA small subunit methyltransferase A from Cupriavidus pinatubonensis (strain JMP 134 / LMG 1197) (Cupriavidus necator (strain JMP 134)).